Consider the following 158-residue polypeptide: NADH-quinone oxidoreductase subunit B (158 aa).

Positions 37, 38, 102, and 132 each coordinate [4Fe-4S] cluster.

The protein belongs to the complex I 20 kDa subunit family. NDH-1 is composed of 14 different subunits. Subunits NuoB, C, D, E, F, and G constitute the peripheral sector of the complex. [4Fe-4S] cluster serves as cofactor.

The protein resides in the cell inner membrane. It carries out the reaction a quinone + NADH + 5 H(+)(in) = a quinol + NAD(+) + 4 H(+)(out). Its function is as follows. NDH-1 shuttles electrons from NADH, via FMN and iron-sulfur (Fe-S) centers, to quinones in the respiratory chain. Couples the redox reaction to proton translocation (for every two electrons transferred, four hydrogen ions are translocated across the cytoplasmic membrane), and thus conserves the redox energy in a proton gradient. This is NADH-quinone oxidoreductase subunit B from Legionella pneumophila (strain Paris).